The primary structure comprises 277 residues: Mannosyl-3-phosphoglycerate phosphatase (277 aa).

The active-site Nucleophile is the aspartate 13. 3 residues coordinate Mg(2+): aspartate 13, aspartate 15, and aspartate 219.

This sequence belongs to the HAD-like hydrolase superfamily. MPGP family. The cofactor is Mg(2+).

It localises to the cytoplasm. It catalyses the reaction 2-O-(alpha-D-mannosyl)-3-phosphoglycerate + H2O = (2R)-2-O-(alpha-D-mannosyl)-glycerate + phosphate. It functions in the pathway carbohydrate biosynthesis; 2-(alpha-D-mannosyl)-D-glycerate biosynthesis; 2-(alpha-D-mannosyl)-D-glycerate from GDP-alpha-D-mannose (MPG route): step 2/2. Functionally, hydrolyzes mannosyl-3-phosphoglycerate (MPG) to form the osmolyte mannosylglycerate (MG). The protein is Mannosyl-3-phosphoglycerate phosphatase of Aeropyrum pernix (strain ATCC 700893 / DSM 11879 / JCM 9820 / NBRC 100138 / K1).